The primary structure comprises 129 residues: Iron-sulfur cluster assembly 1 homolog, mitochondrial (129 aa).

Residues 1-12 (MSASLVRATVRA) constitute a mitochondrion transit peptide. Fe cation contacts are provided by cysteine 57, cysteine 121, and cysteine 123.

The protein belongs to the HesB/IscA family. In terms of assembly, interacts with CRY2, but not with CRY1 (in vitro).

It is found in the mitochondrion. In terms of biological role, involved in the maturation of mitochondrial 4Fe-4S proteins functioning late in the iron-sulfur cluster assembly pathway. Probably involved in the binding of an intermediate of Fe/S cluster assembly. The protein is Iron-sulfur cluster assembly 1 homolog, mitochondrial (ISCA1) of Bos taurus (Bovine).